The following is a 229-amino-acid chain: Translin (229 aa).

The DNA/RNA binding stretch occupies residues Arg-86–His-90. The interval Leu-177–Leu-198 is leucine-zipper.

This sequence belongs to the translin family. Ring-shaped heterooctamer of six TSN and two TSNAX subunits, DNA/RNA binding occurs inside the ring.

Its subcellular location is the cytoplasm. The protein localises to the nucleus. Its function is as follows. Exhibits both single-stranded and double-stranded endoribonuclease activity. May act as an activator of RNA-induced silencing complex (RISC) by facilitating endonucleolytic cleavage of the siRNA passenger strand. Functionally, DNA-binding protein that specifically recognizes consensus sequences at the breakpoint junctions in chromosomal translocations, mostly involving immunoglobulin (Ig)/T-cell receptor gene segments. Seems to recognize single-stranded DNA ends generated by staggered breaks occurring at recombination hot spots. The polypeptide is Translin (TSN) (Gallus gallus (Chicken)).